Reading from the N-terminus, the 70-residue chain is MTTIVLNPNEPVEVALRRFRRSIERTGLIKELRARTSYEKPTTERKRKKAAAVARLRKQVRRSMPPKKKY.

Positions 37 to 70 (SYEKPTTERKRKKAAAVARLRKQVRRSMPPKKKY) are disordered. Basic residues predominate over residues 45 to 70 (RKRKKAAAVARLRKQVRRSMPPKKKY).

Belongs to the bacterial ribosomal protein bS21 family.

This chain is Small ribosomal subunit protein bS21B, found in Burkholderia pseudomallei (strain K96243).